The sequence spans 36 residues: Hemoglobin subunit beta (36 aa).

One can recognise a Globin domain in the interval 1 to 36 (VCVLAHHFGKEFTPQVQAAYQKVVAGVANALAHKYH). Lys-34 is modified (N6-acetyllysine).

It belongs to the globin family. As to quaternary structure, heterotetramer of two alpha chains and two beta chains. Red blood cells.

Involved in oxygen transport from the lung to the various peripheral tissues. The protein is Hemoglobin subunit beta (HBB) of Pongo pygmaeus (Bornean orangutan).